A 282-amino-acid polypeptide reads, in one-letter code: DNA-dependent metalloprotease WSS1 homolog 2 (282 aa).

The 75-residue stretch at 1–75 folds into the Ubiquitin-like domain; it reads MELKFSCRGN…CLIRQDKDIV (75 aa). Residues 99-274 enclose the WLM domain; the sequence is PHTTPKPASI…LLAAAERRKQ (176 aa). Position 202 (H202) interacts with Zn(2+). The active site involves E203. 2 residues coordinate Zn(2+): H206 and H212. A disordered region spans residues 234 to 282; sequence GKPGSYVSDRASYTPQQDNDDEDQKNHRRDLLLAAAERRKQSGSKVQKE. The segment covering 269 to 282 has biased composition (basic and acidic residues); it reads AERRKQSGSKVQKE.

It belongs to the peptidase M3 family. WSS1-like metalloprotease (WLM) subfamily. The cofactor is Zn(2+).

Its subcellular location is the cytoplasm. The protein localises to the nucleus. Metalloendopeptidase that acts selectively on DNA-binding proteins. DNA is needed to bring the protease and substrates together to enable proteolysis. Involved in the repair of toxic DNA-protein cross-links (DPCs) such as covalently trapped topoisomerase 1 (TOP1) adducts on DNA lesions or DPCs induced by reactive compounds such as formaldehyde. The chain is DNA-dependent metalloprotease WSS1 homolog 2 from Schizosaccharomyces pombe (strain 972 / ATCC 24843) (Fission yeast).